The following is a 249-amino-acid chain: uncharacterized protein (249 aa).

Helical transmembrane passes span Ile-49–Leu-69 and Ile-223–Leu-243.

It localises to the cell membrane. This is an uncharacterized protein from Bacillus anthracis.